A 291-amino-acid chain; its full sequence is ATP synthase gamma chain (291 aa).

This sequence belongs to the ATPase gamma chain family. In terms of assembly, F-type ATPases have 2 components, CF(1) - the catalytic core - and CF(0) - the membrane proton channel. CF(1) has five subunits: alpha(3), beta(3), gamma(1), delta(1), epsilon(1). CF(0) has three main subunits: a, b and c.

It is found in the cell inner membrane. In terms of biological role, produces ATP from ADP in the presence of a proton gradient across the membrane. The gamma chain is believed to be important in regulating ATPase activity and the flow of protons through the CF(0) complex. The protein is ATP synthase gamma chain of Ruegeria sp. (strain TM1040) (Silicibacter sp.).